A 115-amino-acid chain; its full sequence is Superoxide reductase (115 aa).

E14, H16, H41, H47, C102, and H105 together coordinate Fe cation.

The protein belongs to the desulfoferrodoxin family. As to quaternary structure, homotetramer. Fe cation serves as cofactor.

The enzyme catalyses reduced [rubredoxin] + superoxide + 2 H(+) = oxidized [rubredoxin] + H2O2. Its function is as follows. Uses electrons from reduced NADP, by way of rubredoxin and an oxidoreductase, to catalyze the reduction of superoxide to hydrogen peroxide. The chain is Superoxide reductase (sorA) from Pyrococcus abyssi (strain GE5 / Orsay).